The primary structure comprises 322 residues: CMP-sialic acid transporter 1 (322 aa).

The Cytoplasmic segment spans residues 1-2; sequence MQ. Residues 3 to 23 traverse the membrane as a helical segment; sequence WYLVAALLTVLTSSQGILTTL. The Lumenal segment spans residues 24–33; the sequence is SQSNGKYKYD. Residues 34–54 traverse the membrane as a helical segment; it reads YATIPFLAELFKLSFSSFFLW. The Cytoplasmic segment spans residues 55-75; the sequence is KECQSSSPPRMTKEWRSIRLY. The chain crosses the membrane as a helical span at residues 76–96; sequence LVPSVIYLIHNNVQFATLTYV. Over 97–100 the chain is Lumenal; the sequence is DPST. The chain crosses the membrane as a helical span at residues 101-120; sequence YQIMGNLKIVTTGILFRLVL. Residues 121 to 126 are Cytoplasmic-facing; it reads KRKLSN. Residues 127–144 form a helical membrane-spanning segment; sequence LQWMAVVLLAVGTTTSQV. Topologically, residues 145–157 are lumenal; that stretch reads KGCGDAPCDSLFS. The helical transmembrane segment at 158–178 threads the bilayer; it reads APFQGYMLGILSACLSALAGV. At 179–198 the chain is on the cytoplasmic side; sequence YTEYLMKKNNDSLYWQNVQL. Residues 199–219 form a helical membrane-spanning segment; sequence YTFGVIFNMGWLIYGDFKAGF. Residues 220–233 are Lumenal-facing; that stretch reads ERGPWWQRLFNGYS. The helical transmembrane segment at 234-254 threads the bilayer; that stretch reads ITTWMVVFNLGSTGLLVSWLM. The Cytoplasmic portion of the chain corresponds to 255 to 262; sequence KYSDNIVK. The helical transmembrane segment at 263-283 threads the bilayer; it reads VYSTSMAMLLTMVLSVYLFNV. Topologically, residues 284–286 are lumenal; sequence RAT.

Belongs to the nucleotide-sugar transporter family. CMP-Sialate:CMP antiporter (TC 2.A.7.12) subfamily. In terms of tissue distribution, expressed in roots, leaves and stalks.

The protein localises to the golgi apparatus membrane. Sugar transporter involved in the transport of CMP-sialic acid from the cytoplasm into the Golgi. May transport important nucleotide sugars such as CMP-Kdo (2-keto-3-deoxy-D-manno-octulosonic acid) in physiological conditions. The sequence is that of CMP-sialic acid transporter 1 from Oryza sativa subsp. japonica (Rice).